Here is a 93-residue protein sequence, read N- to C-terminus: Acyl carrier protein AcpXL (93 aa).

Residues 2–88 form the Carrier domain; that stretch reads SSTFDKVADI…NLCAKIDELV (87 aa). Ser-37 bears the O-(pantetheine 4'-phosphoryl)serine mark.

4'-phosphopantetheine is transferred from CoA to a specific serine of apo-ACP by AcpS. This modification is essential for activity because fatty acids are bound in thioester linkage to the sulfhydryl of the prosthetic group.

The protein localises to the cytoplasm. It participates in glycolipid biosynthesis; KDO(2)-lipid A biosynthesis. Its function is as follows. Carrier of the growing fatty acid chain in fatty acid biosynthesis. Is involved in the transfer of long hydroxylated fatty acids to lipid A. This is Acyl carrier protein AcpXL (acpXL) from Brucella melitensis biotype 1 (strain ATCC 23456 / CCUG 17765 / NCTC 10094 / 16M).